The primary structure comprises 132 residues: Putative RNase AF_0947 (132 aa).

Catalysis depends on residues Arg91 and His96. An RX(4)HXY motif motif is present at residues 91–98; the sequence is RNAIAHHY. Tyr98 is modified (O-di-AMP-tyrosine).

It belongs to the HepT RNase toxin family. Homodimer, probably forms a complex with cognate antitoxin AF_0948. Modified by cognate antitoxin AF_0948; probably at least 2 successive AMPylation events occur on Tyr-98.

In terms of biological role, probable toxic component of a putative type VII toxin-antitoxin (TA) system, probably an RNase. Probably neutralized by cognate antitoxin AF_0948. Neutralization may be due to AMPylation by AF_0948. In Archaeoglobus fulgidus (strain ATCC 49558 / DSM 4304 / JCM 9628 / NBRC 100126 / VC-16), this protein is Putative RNase AF_0947.